Reading from the N-terminus, the 348-residue chain is Outer membrane protein A (348 aa).

Positions 1–21 (MKKTAIAIAVALAGFATVAQA) are cleaved as a signal peptide. 8 beta stranded membrane-spanning segments follow: residues 27-37 (TWYTGAKLGWS), 55-66 (QLGAGAFGGYQV), 70-78 (VGFEMGYDW), 96-107 (QGVQLTAKLGYP), 112-120 (LDIYTRLGG), 146-155 (PVFAGGVEYA), 160-167 (IATRLEYQ), and 186-194 (LLSLGVSYR). The interval 201-210 (APVVAPAPAP) is hinge-like. 3 consecutive repeat copies span residues 205-206 (AP), 207-208 (AP), and 209-210 (AP). Residues 205–210 (APAPAP) are 3 X 2 AA tandem repeats of A-P. The OmpA-like domain maps to 212 to 340 (VQTKHFTLKS…RVEIEVKGIK (129 aa)). An intrachain disulfide couples C313 to C325.

Belongs to the outer membrane OOP (TC 1.B.6) superfamily. OmpA family. As to quaternary structure, monomer and homodimer. (Microbial infection) Upon infection with phage Sf6 associates with the mature bacteriophage capsid. Was originally suggested to be within the bacteriophage capsid. This has been disproven.

The protein localises to the extracellular vesicle. It localises to the cell outer membrane. In terms of biological role, with TolR probably plays a role in maintaining the position of the peptidoglycan cell wall in the periplasm. Acts as a porin with low permeability that allows slow penetration of small solutes; an internal gate slows down solute passage. Required for conjugation with F-type plasmids; probably serves as the mating receptor on recipient cells. Its function is as follows. (Microbial infection) Serves as a secondary receptor during phage Sf6 infection; infection requires both lipopolysaccharide (LPS) and the OmpA beta-barrel. In Shigella flexneri, this protein is Outer membrane protein A.